A 188-amino-acid chain; its full sequence is Elongation factor P (188 aa).

Belongs to the elongation factor P family.

It localises to the cytoplasm. It participates in protein biosynthesis; polypeptide chain elongation. In terms of biological role, involved in peptide bond synthesis. Stimulates efficient translation and peptide-bond synthesis on native or reconstituted 70S ribosomes in vitro. Probably functions indirectly by altering the affinity of the ribosome for aminoacyl-tRNA, thus increasing their reactivity as acceptors for peptidyl transferase. In Bradyrhizobium sp. (strain BTAi1 / ATCC BAA-1182), this protein is Elongation factor P.